The sequence spans 174 residues: Shikimate kinase (174 aa).

Residue 15-20 coordinates ATP; that stretch reads GTGKST. Ser-19 is a binding site for Mg(2+). 3 residues coordinate substrate: Asp-37, Arg-61, and Gly-82. Arg-120 lines the ATP pocket. Arg-138 is a binding site for substrate.

It belongs to the shikimate kinase family. As to quaternary structure, monomer. Mg(2+) is required as a cofactor.

The protein localises to the cytoplasm. The enzyme catalyses shikimate + ATP = 3-phosphoshikimate + ADP + H(+). Its pathway is metabolic intermediate biosynthesis; chorismate biosynthesis; chorismate from D-erythrose 4-phosphate and phosphoenolpyruvate: step 5/7. Functionally, catalyzes the specific phosphorylation of the 3-hydroxyl group of shikimic acid using ATP as a cosubstrate. This Staphylococcus aureus (strain NCTC 8325 / PS 47) protein is Shikimate kinase.